The sequence spans 658 residues: Alkyldihydroxyacetonephosphate synthase, peroxisomal (658 aa).

Disordered stretches follow at residues 1–41 and 63–86; these read MAEA…LRVL and AASAATAAPTATPAAQESGTIPKK. Residues 1 to 58 constitute a peroxisome transit peptide; that stretch reads MAEAAAAAGGTGLGAGASYGSAADRDRDPDPDRAGRRLRVLSGHLLGRPREALSTNEC. The span at 23–35 shows a compositional bias: basic and acidic residues; that stretch reads ADRDRDPDPDRAG. Residues 63 to 77 are compositionally biased toward low complexity; the sequence is AASAATAAPTATPAA. The residue at position 65 (Ser-65) is a Phosphoserine. Position 74 is a phosphothreonine (Thr-74). Lys-102 bears the N6-acetyllysine mark. An FAD-binding PCMH-type domain is found at 202–384; that stretch reads FERIPDIVLW…TEATIKIRPV (183 aa). FAD is bound by residues 234–240, 303–309, and 316–319; these read PIGGGTS, DSLEFST, and TRAS. Lys-347 carries the N6-acetyllysine modification. Residue 368–374 participates in FAD binding; that stretch reads EGTLGVI. Arg-515 serves as a coordination point for substrate. Tyr-578 functions as the Proton donor/acceptor in the catalytic mechanism. Important for enzyme activity stretches follow at residues 615–617 and 654–658; these read HHH and NRNLL.

This sequence belongs to the FAD-binding oxidoreductase/transferase type 4 family. In terms of assembly, homodimer. It depends on FAD as a cofactor.

The protein resides in the peroxisome membrane. Its subcellular location is the peroxisome. The catalysed reaction is a long chain fatty alcohol + a 1-acylglycerone 3-phosphate = a 1-O-alkylglycerone 3-phosphate + a long-chain fatty acid + H(+). It catalyses the reaction hexadecan-1-ol + 1-hexadecanoylglycerone 3-phosphate = 1-O-hexadecylglycerone 3-phosphate + hexadecanoate + H(+). It carries out the reaction 1-hexadecanoylglycerone 3-phosphate + a long-chain fatty acid = a 1-acylglycerone 3-phosphate + hexadecanoate. The protein operates within glycerolipid metabolism; ether lipid biosynthesis. Functionally, catalyzes the exchange of the acyl chain in acyl-dihydroxyacetonephosphate (acyl-DHAP) for a long chain fatty alcohol, yielding the first ether linked intermediate, i.e. alkyl-dihydroxyacetonephosphate (alkyl-DHAP), in the pathway of ether lipid biosynthesis. The sequence is that of Alkyldihydroxyacetonephosphate synthase, peroxisomal (AGPS) from Homo sapiens (Human).